A 450-amino-acid chain; its full sequence is NADP-specific glutamate dehydrogenase (450 aa).

K111 is an active-site residue.

The protein belongs to the Glu/Leu/Phe/Val dehydrogenases family. In terms of assembly, homohexamer.

The catalysed reaction is L-glutamate + NADP(+) + H2O = 2-oxoglutarate + NH4(+) + NADPH + H(+). This chain is NADP-specific glutamate dehydrogenase, found in Hebeloma cylindrosporum.